The sequence spans 197 residues: Probable 26S proteasome non-ATPase regulatory subunit 9 (197 aa).

Residues 75–166 form the PDZ domain; the sequence is KIVVEMENEN…KIIRVTVIRE (92 aa).

Belongs to the proteasome subunit p27 family.

Its function is as follows. Acts as a chaperone during the assembly of the 26S proteasome, specifically of the base subcomplex of the 19S regulatory complex (RC). This Caenorhabditis elegans protein is Probable 26S proteasome non-ATPase regulatory subunit 9 (psmd-9).